The primary structure comprises 2037 residues: Fatty acid synthase subunit beta (2037 aa).

The tract at residues 1–453 (MSTHRPFQLT…VYDTFDGSDF (453 aa)) is acetyltransferase. Ser261 (for acetyltransferase activity) is an active-site residue. An enoyl reductase region spans residues 465-798 (VKLITELPVH…GSRVMTSKES (334 aa)). The dehydratase stretch occupies residues 1132-1612 (GTELNWLQAF…LPNDTLQTTM (481 aa)). In terms of domain architecture, MaoC-like spans 1506–1634 (NGKTIEESVI…KVETRNVETE (129 aa)). The interval 1613–1833 (EHVGMINGRK…MTMQVAVPRD (221 aa)) is malonyl/palmitoyl transferase. The For malonyltransferase activity role is filled by Ser1796.

Belongs to the fungal fatty acid synthetase subunit beta family. In terms of assembly, [Alpha(6)beta(6)] hexamers of two multifunctional subunits (alpha and beta).

It catalyses the reaction acetyl-CoA + n malonyl-CoA + 2n NADPH + 4n H(+) = a long-chain-acyl-CoA + n CoA + n CO2 + 2n NADP(+).. The catalysed reaction is holo-[ACP] + acetyl-CoA = acetyl-[ACP] + CoA. The enzyme catalyses holo-[ACP] + malonyl-CoA = malonyl-[ACP] + CoA. It carries out the reaction a (3R)-hydroxyacyl-[ACP] = a (2E)-enoyl-[ACP] + H2O. It catalyses the reaction a 2,3-saturated acyl-[ACP] + NAD(+) = a (2E)-enoyl-[ACP] + NADH + H(+). The catalysed reaction is (9Z)-octadecenoyl-[ACP] + H2O = (9Z)-octadecenoate + holo-[ACP] + H(+). Its function is as follows. Fatty acid synthetase catalyzes the formation of long-chain fatty acids from acetyl-CoA, malonyl-CoA and NADPH. The beta subunit contains domains for: [acyl-carrier-protein] acetyltransferase and malonyltransferase, S-acyl fatty acid synthase thioesterase, enoyl-[acyl-carrier-protein] reductase, and 3-hydroxypalmitoyl-[acyl-carrier-protein] dehydratase. The polypeptide is Fatty acid synthase subunit beta (FAS1) (Candida albicans (Yeast)).